The sequence spans 367 residues: Dual-specificity RNA methyltransferase RlmN (367 aa).

Glutamate 93 (proton acceptor) is an active-site residue. The region spanning glutamate 99–aspartate 333 is the Radical SAM core domain. Cysteine 106 and cysteine 338 are joined by a disulfide. [4Fe-4S] cluster is bound by residues cysteine 113, cysteine 117, and cysteine 120. Residues glycine 162–glutamate 163, serine 194, serine 216–histidine 218, and asparagine 295 each bind S-adenosyl-L-methionine. The S-methylcysteine intermediate role is filled by cysteine 338.

This sequence belongs to the radical SAM superfamily. RlmN family. [4Fe-4S] cluster serves as cofactor.

It is found in the cytoplasm. It carries out the reaction adenosine(2503) in 23S rRNA + 2 reduced [2Fe-2S]-[ferredoxin] + 2 S-adenosyl-L-methionine = 2-methyladenosine(2503) in 23S rRNA + 5'-deoxyadenosine + L-methionine + 2 oxidized [2Fe-2S]-[ferredoxin] + S-adenosyl-L-homocysteine. It catalyses the reaction adenosine(37) in tRNA + 2 reduced [2Fe-2S]-[ferredoxin] + 2 S-adenosyl-L-methionine = 2-methyladenosine(37) in tRNA + 5'-deoxyadenosine + L-methionine + 2 oxidized [2Fe-2S]-[ferredoxin] + S-adenosyl-L-homocysteine. Its function is as follows. Specifically methylates position 2 of adenine 2503 in 23S rRNA and position 2 of adenine 37 in tRNAs. m2A2503 modification seems to play a crucial role in the proofreading step occurring at the peptidyl transferase center and thus would serve to optimize ribosomal fidelity. The polypeptide is Dual-specificity RNA methyltransferase RlmN (Aeromonas hydrophila subsp. hydrophila (strain ATCC 7966 / DSM 30187 / BCRC 13018 / CCUG 14551 / JCM 1027 / KCTC 2358 / NCIMB 9240 / NCTC 8049)).